The primary structure comprises 566 residues: Cyclin-dependent kinase-like 2 (566 aa).

Residues Tyr-4–Phe-287 form the Protein kinase domain. Residues Val-10–Val-18 and Lys-33 contribute to the ATP site. The [NKR]KIAxRE signature appears at Lys-45–Glu-51. The active-site Proton acceptor is the Asp-126. Disordered stretches follow at residues Asp-307–Arg-334 and Gln-545–His-566. The segment covering Arg-320–Arg-334 has biased composition (basic and acidic residues).

Belongs to the protein kinase superfamily. CMGC Ser/Thr protein kinase family. CDC2/CDKX subfamily.

The protein resides in the cytoplasm. The protein localises to the nucleus. The enzyme catalyses L-seryl-[protein] + ATP = O-phospho-L-seryl-[protein] + ADP + H(+). The catalysed reaction is L-threonyl-[protein] + ATP = O-phospho-L-threonyl-[protein] + ADP + H(+). The sequence is that of Cyclin-dependent kinase-like 2 from Oryctolagus cuniculus (Rabbit).